The chain runs to 821 residues: G-type lectin S-receptor-like serine/threonine-protein kinase SD2-5 (821 aa).

The signal sequence occupies residues 1–21 (MRGVFIVIVTCLVFLPDPLRA). Residues 22-429 (GVASIGSITP…NGEDDGKHFP (408 aa)) are Extracellular-facing. The Bulb-type lectin domain occupies 33–148 (FGGSQMNYIN…DGTSIWESFD (116 aa)). Residues Asn-51, Asn-121, Asn-174, and Asn-248 are each glycosylated (N-linked (GlcNAc...) asparagine). An EGF-like; atypical domain is found at 280 to 314 (PSDLCGTPEPCGPYYVCSGSKVCGCVSGLSRARSD). 2 disulfide bridges follow: Cys-284-Cys-296 and Cys-290-Cys-302. A PAN domain is found at 323-411 (CKKTKDNATL…SGFVSYIKIA (89 aa)). Residues Asn-329, Asn-370, and Asn-380 are each glycosylated (N-linked (GlcNAc...) asparagine). Disulfide bonds link Cys-363/Cys-385 and Cys-367/Cys-373. The chain crosses the membrane as a helical span at residues 430-450 (YVVIIVVVTVFIIAVLIFVAF). Over 451–821 (RIHKRKKMIL…LSAVRLSGPR (371 aa)) the chain is Cytoplasmic. Residues 493–768 (NNFSVKLGQG…KVVQMLEGVF (276 aa)) form the Protein kinase domain. ATP-binding positions include 499 to 507 (LGQGGFGSV) and Lys-521. The tract at residues 581 to 599 (KDGDVLLDWDTRFNIALGT) is caM-binding. Asp-618 functions as the Proton acceptor in the catalytic mechanism. At Ser-635 the chain carries Phosphoserine. Residue Thr-652 is modified to Phosphothreonine.

The protein belongs to the protein kinase superfamily. Ser/Thr protein kinase family. As to quaternary structure, interacts with PUB9, PUB13, PUB14 and PUB29.

The protein resides in the membrane. It catalyses the reaction L-seryl-[protein] + ATP = O-phospho-L-seryl-[protein] + ADP + H(+). The enzyme catalyses L-threonyl-[protein] + ATP = O-phospho-L-threonyl-[protein] + ADP + H(+). The polypeptide is G-type lectin S-receptor-like serine/threonine-protein kinase SD2-5 (SD25) (Arabidopsis thaliana (Mouse-ear cress)).